The following is a 327-amino-acid chain: Leucotoxin LukD (327 aa).

Residues 1–26 form the signal peptide; it reads MKIEKLGKSSVASSIALLLLSNTVDA.

It belongs to the aerolysin family. Toxicity requires sequential binding and synergistic association of a class S and a class F component which form heterooligomeric complexes. LukE (class S) associates with LukD (class F). LukD can also associate with HlgA.

The protein resides in the secreted. Functionally, part of a bi-component leucotoxin that acts by forming pores in the membrane of the target cells. LukE-LukD is as effective as the Panton-Valentine leucocidin (PVL) for inducing dermonecrosis when injected in the rabbit skin, but not hemolytic and poorly leucotoxic on human blood cells compared to other leucotoxins expressed by S.aureus. HlgA-LukD is a Ca(2+) channel inducer. The chain is Leucotoxin LukD (lukD) from Staphylococcus aureus.